The chain runs to 181 residues: MGDIFKNNGVLQGRLRAVACAPHCFGPRLRCLHHDQGLTELAWGTWPHSHPVRHQPQMPSARECCSIVCMAAKEVSAPKAPGSPWMVPGDVAMSGHRVGALDERGHPNPQTGHCRGGSVSVTWSSVSCCRGRLAAVRVMIARDPSTCHLAKGCSPAWGFLPQARGPAGTRTPQRRCSSHEA.

Residues glutamine 162 to alanine 181 are disordered.

This is an uncharacterized protein from Homo sapiens (Human).